The sequence spans 394 residues: 8-amino-7-oxononanoate synthase (394 aa).

A substrate-binding site is contributed by arginine 18. 105–106 serves as a coordination point for pyridoxal 5'-phosphate; the sequence is GY. Residue histidine 130 participates in substrate binding. Positions 175, 203, and 232 each coordinate pyridoxal 5'-phosphate. Residue lysine 235 is modified to N6-(pyridoxal phosphate)lysine. Threonine 349 provides a ligand contact to substrate.

Belongs to the class-II pyridoxal-phosphate-dependent aminotransferase family. BioF subfamily. In terms of assembly, homodimer. Requires pyridoxal 5'-phosphate as cofactor.

It carries out the reaction 6-carboxyhexanoyl-[ACP] + L-alanine + H(+) = (8S)-8-amino-7-oxononanoate + holo-[ACP] + CO2. Its pathway is cofactor biosynthesis; biotin biosynthesis. Its function is as follows. Catalyzes the decarboxylative condensation of pimeloyl-[acyl-carrier protein] and L-alanine to produce 8-amino-7-oxononanoate (AON), [acyl-carrier protein], and carbon dioxide. The sequence is that of 8-amino-7-oxononanoate synthase from Marinobacter nauticus (strain ATCC 700491 / DSM 11845 / VT8) (Marinobacter aquaeolei).